The sequence spans 250 residues: Imidazole glycerol phosphate synthase subunit HisF (250 aa).

Catalysis depends on residues aspartate 11 and aspartate 130.

It belongs to the HisA/HisF family. As to quaternary structure, heterodimer of HisH and HisF.

The protein resides in the cytoplasm. The enzyme catalyses 5-[(5-phospho-1-deoxy-D-ribulos-1-ylimino)methylamino]-1-(5-phospho-beta-D-ribosyl)imidazole-4-carboxamide + L-glutamine = D-erythro-1-(imidazol-4-yl)glycerol 3-phosphate + 5-amino-1-(5-phospho-beta-D-ribosyl)imidazole-4-carboxamide + L-glutamate + H(+). It participates in amino-acid biosynthesis; L-histidine biosynthesis; L-histidine from 5-phospho-alpha-D-ribose 1-diphosphate: step 5/9. Functionally, IGPS catalyzes the conversion of PRFAR and glutamine to IGP, AICAR and glutamate. The HisF subunit catalyzes the cyclization activity that produces IGP and AICAR from PRFAR using the ammonia provided by the HisH subunit. This chain is Imidazole glycerol phosphate synthase subunit HisF, found in Elusimicrobium minutum (strain Pei191).